Consider the following 593-residue polypeptide: ATPase family AAA domain-containing protein 3-A (593 aa).

The interval Met1–Ser64 is disordered. At Met1 to Lys242 the chain is on the mitochondrial intermembrane side. Residues Pro15–Pro27 are compositionally biased toward pro residues. 2 stretches are compositionally biased toward basic and acidic residues: residues Gly33–Ser44 and Arg53–Ser64. Residues Glu52–Arg215 adopt a coiled-coil conformation. A helical transmembrane segment spans residues Val243–Ala260. At Lys261–Val593 the chain is on the mitochondrial matrix side. Gly348–Thr355 provides a ligand contact to ATP.

It belongs to the AAA ATPase family. As to quaternary structure, can form homooligomers. Homodimer formation at the N-terminus may be regulated by ATP and is required for the interaction with the inner surface of the mitochondrial outer membrane and correct mitochondrial homeostasis.

It is found in the mitochondrion inner membrane. The protein resides in the mitochondrion matrix. Its subcellular location is the mitochondrion nucleoid. The catalysed reaction is ATP + H2O = ADP + phosphate + H(+). Essential for mitochondrial network organization, mitochondrial metabolism and cell growth at organism and cellular level. May play an important role in mitochondrial protein synthesis. May also participate in mitochondrial DNA replication. May bind to mitochondrial DNA D-loops and contribute to nucleoid stability. Required for enhanced channeling of cholesterol for hormone-dependent steroidogenesis. Involved in mitochondrial-mediated antiviral innate immunity. Required to protect mitochondria from the PERK-mediated unfolded protein response: specifically inhibits the activity of EIF2AK3/PERK at mitochondria-endoplasmic reticulum contact sites, thereby providing a safe haven for mitochondrial protein translation during endoplasmic reticulum stress. Ability to inhibit EIF2AK3/PERK is independent of its ATPase activity. Also involved in the mitochondrial DNA damage response by promoting signaling between damaged genomes and the mitochondrial membrane, leading to activation of the integrated stress response (ISR). The protein is ATPase family AAA domain-containing protein 3-A (atad3-a) of Xenopus laevis (African clawed frog).